The following is a 265-amino-acid chain: NAD kinase (265 aa).

Aspartate 45 (proton acceptor) is an active-site residue. Residues 45 to 46 (DG), 121 to 122 (NE), arginine 147, aspartate 149, 160 to 165 (TAYSKS), alanine 184, and glutamine 222 contribute to the NAD(+) site.

It belongs to the NAD kinase family. A divalent metal cation is required as a cofactor.

It localises to the cytoplasm. The enzyme catalyses NAD(+) + ATP = ADP + NADP(+) + H(+). In terms of biological role, involved in the regulation of the intracellular balance of NAD and NADP, and is a key enzyme in the biosynthesis of NADP. Catalyzes specifically the phosphorylation on 2'-hydroxyl of the adenosine moiety of NAD to yield NADP. This is NAD kinase from Lacticaseibacillus paracasei (strain ATCC 334 / BCRC 17002 / CCUG 31169 / CIP 107868 / KCTC 3260 / NRRL B-441) (Lactobacillus paracasei).